Consider the following 199-residue polypeptide: Probable cobalt-precorrin-6B C(15)-methyltransferase (decarboxylating) (199 aa).

S-adenosyl-L-methionine-binding positions include Thr-24, 48–52, Asp-72, and Ala-101; that span reads GCGTG.

This sequence belongs to the methyltransferase superfamily. Archaeal-type CbiT family.

It catalyses the reaction Co-precorrin-6B + S-adenosyl-L-methionine = Co-precorrin-7 + S-adenosyl-L-homocysteine + CO2. It functions in the pathway cofactor biosynthesis; adenosylcobalamin biosynthesis; cob(II)yrinate a,c-diamide from sirohydrochlorin (anaerobic route): step 8/10. In terms of biological role, catalyzes the methylation of C-15 in cobalt-precorrin-6B followed by the decarboxylation of C-12 to form cobalt-precorrin-7. The polypeptide is Probable cobalt-precorrin-6B C(15)-methyltransferase (decarboxylating) (Saccharolobus islandicus (strain L.S.2.15 / Lassen #1) (Sulfolobus islandicus)).